The sequence spans 626 residues: uncharacterized protein (626 aa).

Residues 103-123 (AGALLVKFFPLLLLYPLTYLA) form a helical membrane-spanning segment. The Protein kinase domain maps to 200–618 (FENREPVGSG…DILEAARPFL (419 aa)). ATP-binding positions include 206 to 214 (VGSGCVAQV) and Lys311. The Proton acceptor role is filled by Asp445.

This sequence belongs to the protein kinase superfamily. ADCK protein kinase family.

It is found in the mitochondrion. Its subcellular location is the membrane. The function of this protein is not yet clear. It is not known if it has protein kinase activity and what type of substrate it would phosphorylate (Ser, Thr or Tyr). Involved in the mitochondrial import of CoQ precursors, plays a role in muscle mitochondrial function and fatty acid beta-oxidation. This is an uncharacterized protein from Homo sapiens (Human).